Here is a 76-residue protein sequence, read N- to C-terminus: Adipogenesis regulatory factor (76 aa).

As to expression, expressed in adipose tissue (at protein level). Highly expressed in omental and subcutaneous adipose tissues. Expressed in heart, cornea, liver, kidney and spleen.

Its subcellular location is the nucleus. Its function is as follows. Plays a role in fat cell development; promotes adipogenic differentiation and stimulates transcription initiation of master adipogenesis factors like PPARG and CEBPA at early stages of preadipocyte differentiation. Its overexpression confers resistance to the anticancer chemotherapeutic drug cisplatin. This Homo sapiens (Human) protein is Adipogenesis regulatory factor (ADIRF).